Here is a 242-residue protein sequence, read N- to C-terminus: uncharacterized protein (242 aa).

Disordered stretches follow at residues 16 to 121 (GLYK…GAMA) and 152 to 178 (PVRP…TQPV). Pro residues-rich tracts occupy residues 50 to 64 (PRPP…PSPA) and 97 to 113 (EPRP…PPGP). Residues 157–172 (KLPKGKGRLRRPRQSR) are compositionally biased toward basic residues. Position 175 is a phosphothreonine (Thr175). Residues Ser192, Ser206, Ser216, Ser232, and Ser238 each carry the phosphoserine modification. Positions 215 to 242 (QSLSLQREPLGSCKLRNSLDSSDSDSAL) are disordered. Over residues 232 to 242 (SLDSSDSDSAL) the composition is skewed to low complexity.

It localises to the cytoplasm. This is an uncharacterized protein from Rattus norvegicus (Rat).